Consider the following 512-residue polypeptide: MATTNGAVENGQPDGKPPALPRPIRNLEVKFTKIFINNDWHESKSGRKFATYNPSTLEKICEVEEGDKPDVDKAVEAAQAAFQRGSPWRRLDALSRGQLLHQLADLVERDRAILATLETMDTGKPFLHAFFVDLEGCIKTFRYFAGWADKIQGRTIPTDDNVVCFTRHEPIGVCGAITPWNFPLLMLAWKLAPALCCGNTVVLKPAEQTPLTALYLASLIKEVGFPPGVVNIVPGFGPTVGAAISSHPQINKIAFTGSTEVGKLVREAASRSNLKRVTLELGGKNPCIVCADADLDLAVECAHQGVFFNQGQCCTAASRVFVEEQVYGEFVRRSVEFAKKRPVGDPFDAKTEQGPQIDQKQFDKILELIESGKKEGAKLECGGSAMEDRGLFIKPTVFSDVTDNMRIAKEEIFGPVQPILKFKNLEEVIKRANSTDYGLTAAVFTKNLDKALKLAAALESGTVWINCYNAFYAQAPFGGFKMSGNGRELGEYALAEYTEVKTVTIKLEEKNP.

Residues 1 to 22 (MATTNGAVENGQPDGKPPALPR) form a disordered region. Position 2 is an N-acetylalanine (Ala2). NAD(+) is bound by residues Lys204, Glu207, and 257-262 (GSTEVG). Glu280 functions as the Proton acceptor in the catalytic mechanism. Residue Cys314 is the Nucleophile of the active site. Residues Gln361 and Glu411 each coordinate NAD(+).

Belongs to the aldehyde dehydrogenase family. In terms of assembly, homotetramer. As to expression, detected in embryonic head (at protein level). Ventral retina.

It is found in the cytoplasm. The catalysed reaction is retinal + NAD(+) + H2O = retinoate + NADH + 2 H(+). It carries out the reaction all-trans-retinal + NAD(+) + H2O = all-trans-retinoate + NADH + 2 H(+). The enzyme catalyses all-trans-13,14-dihydroretinal + NAD(+) + H2O = all-trans-13,14-dihydroretinoate + NADH + 2 H(+). It participates in cofactor metabolism; retinol metabolism. In terms of biological role, catalyzes the NAD-dependent oxidation of aldehyde substrates, such as all-trans-retinal and all-trans-13,14-dihydroretinal, to their corresponding carboxylic acids, all-trans-retinoate and all-trans-13,14-dihydroretinoate, respectively. High specificity for all-trans-retinal as substrate, can also accept acetaldehyde as substrate in vitro but with lower affinity. Required for the biosynthesis of normal levels of retinoate in the embryonic ocular and nasal regions; a critical lipid in the embryonic development of the eye and the nasal region. This Mus musculus (Mouse) protein is Retinaldehyde dehydrogenase 3 (Aldh1a3).